The sequence spans 191 residues: Calcium-binding protein CML42 (191 aa).

EF-hand domains follow at residues 25 to 60, 116 to 151, and 154 to 189; these read LNAL…LGLN, ENES…LGLP, and GEME…VVIP. Ca(2+)-binding residues include Asp-38, Asn-40, Asp-42, Glu-49, Asp-129, Asn-131, Asp-133, Glu-140, Asp-167, Asn-169, Asp-171, Arg-173, and Glu-178.

Interacts with KIC. Expressed in seedling shoots, roots, rosette leaves and flowers. Expressed in the leaf trichome support cells.

Functionally, probable calcium sensor that binds calcium in vitro. Involved in the regulation of trichome branching. This is Calcium-binding protein CML42 (CML42) from Arabidopsis thaliana (Mouse-ear cress).